The sequence spans 231 residues: Small ribosomal subunit protein uS3 (231 aa).

The 69-residue stretch at 39–107 folds into the KH type-2 domain; it reads IRKYIVENLP…DVKLNIVEIR (69 aa).

The protein belongs to the universal ribosomal protein uS3 family. As to quaternary structure, part of the 30S ribosomal subunit. Forms a tight complex with proteins S10 and S14.

Binds the lower part of the 30S subunit head. Binds mRNA in the 70S ribosome, positioning it for translation. In Novosphingobium aromaticivorans (strain ATCC 700278 / DSM 12444 / CCUG 56034 / CIP 105152 / NBRC 16084 / F199), this protein is Small ribosomal subunit protein uS3.